A 148-amino-acid polypeptide reads, in one-letter code: 3-dehydroquinate dehydratase (148 aa).

Tyrosine 23 (proton acceptor) is an active-site residue. Residues asparagine 75, histidine 81, and aspartate 88 each contribute to the substrate site. The active-site Proton donor is histidine 101. Substrate-binding positions include 102 to 103 and arginine 112; that span reads LS.

It belongs to the type-II 3-dehydroquinase family. As to quaternary structure, homododecamer.

It carries out the reaction 3-dehydroquinate = 3-dehydroshikimate + H2O. Its pathway is metabolic intermediate biosynthesis; chorismate biosynthesis; chorismate from D-erythrose 4-phosphate and phosphoenolpyruvate: step 3/7. Functionally, catalyzes a trans-dehydration via an enolate intermediate. The chain is 3-dehydroquinate dehydratase from Xanthomonas campestris pv. campestris (strain 8004).